The following is a 126-amino-acid chain: Small ribosomal subunit protein eS6 (126 aa).

The protein belongs to the eukaryotic ribosomal protein eS6 family.

In Methanothermobacter thermautotrophicus (strain ATCC 29096 / DSM 1053 / JCM 10044 / NBRC 100330 / Delta H) (Methanobacterium thermoautotrophicum), this protein is Small ribosomal subunit protein eS6.